The primary structure comprises 624 residues: Chaperone protein HtpG (624 aa).

Positions 1 to 336 are a; substrate-binding; that stretch reads MKGQETRGFQ…SSDLPLNVSR (336 aa). Residues 337 to 552 are b; that stretch reads EILQDSTVTR…ADEMSTQMAK (216 aa). The tract at residues 553-624 is c; the sequence is LFAAAGQKVP…IRRMNQLLVS (72 aa).

It belongs to the heat shock protein 90 family. Homodimer.

The protein resides in the cytoplasm. Its function is as follows. Molecular chaperone. Has ATPase activity. This Escherichia coli O139:H28 (strain E24377A / ETEC) protein is Chaperone protein HtpG.